We begin with the raw amino-acid sequence, 164 residues long: UPF0251 protein MM_1448 (164 aa).

Residues 91–100 (GDYRMPRGDR) show a composition bias toward basic and acidic residues. A disordered region spans residues 91-123 (GDYRMPRGDRTGPAGQGPAGGGRGRGQGKGRGG). Residues 104–115 (AGQGPAGGGRGR) are compositionally biased toward gly residues.

This sequence belongs to the UPF0251 family.

The protein is UPF0251 protein MM_1448 of Methanosarcina mazei (strain ATCC BAA-159 / DSM 3647 / Goe1 / Go1 / JCM 11833 / OCM 88) (Methanosarcina frisia).